The sequence spans 73 residues: Large ribosomal subunit protein uL29 (73 aa).

The tract at residues Met1 to Asp20 is disordered.

It belongs to the universal ribosomal protein uL29 family.

The polypeptide is Large ribosomal subunit protein uL29 (Protochlamydia amoebophila (strain UWE25)).